A 357-amino-acid polypeptide reads, in one-letter code: MGINFEDQTTLFNFVVREGNGVKGMIDSGLSSVPRPFVQPLSERIPTQKALTCEATQPIDLSNLDGPQHKEVAKQIVEAAETLGFFQVVNHGVSVELLELLKSSAHEFFAQAPEEKSMYLKEVSPSKLVKYGTSFVPDKEKAIEWKDYVSMLYTNDSEALQHWPQPCREVALEFLNSSMEMVKNVVNILMENVGVTLEEEKMNGLMGTKMVNMNYYPTCPSPELTVGVGRHSDMGMLTVLLQDGIGGLYVKLDNGEWAEIPPVHGALVINIGDTLQILSNGKYKSAEHRVRTTNIGSRVSVPIFTAPNPSQKVGPLPEVVKRDGVARYKEFLFQDYMNNFFGQPHDGKKSLDFARAE.

The Fe2OG dioxygenase domain maps to 206 to 307 (MGTKMVNMNY…RVSVPIFTAP (102 aa)). Tyr216 lines the 2-oxoglutarate pocket. Residues His231, Asp233, and His288 each coordinate Fe cation. The 2-oxoglutarate site is built by Arg298 and Ser300.

This sequence belongs to the iron/ascorbate-dependent oxidoreductase family. The cofactor is L-ascorbate. Fe(2+) serves as cofactor. In terms of tissue distribution, expressed in both primary and lateral roots under iron-deficient conditions, except in apical root zones, and mostly in the root epidermal layer.

The catalysed reaction is scopoletin + 2-oxoglutarate + O2 = fraxetin + succinate + CO2. It participates in phenylpropanoid metabolism. Involved in the pathway of sideretin biosynthesis from feruloyl CoA, a redox-active catecholic metabolite exuded by roots in response to iron deficiency in order to facilitate the uptake of iron; this pathway consists in the successive conversion from feruloyl CoA to scopoletin, from scopoletin to fraxetin and from fraxetin to sideretin. Catalyzes the biosynthesis of fraxetin via scopoletin hydroxylation. This chain is Scopoletin 8-hydroxylase, found in Arabidopsis thaliana (Mouse-ear cress).